The chain runs to 327 residues: MREVLLLGSLVVLALLSLFPCCSCLSQGAEEEEDDGEVRLMGLAGEAAGSPGSGGGFSANGKFSYGYASSPGKRSSMEDFYDTRIDGVDGETVGLFGVFDGHGGARAAEFVKQNLFTNLIKHPKLFSDTKSAIAETYTSTDSELLKAETSHNRDAGSTASTAILVGDRLLVANVGDSRAVICRGGDAIAVSRDHKPDQSDERQRIEDAGGFVMWAGTWRVGGVLAVSRAFGDKLLKQYVVADPEIKEEVVDSSLEFLILASDGLWDVVTNEEAVAMVKPILDSEQAAKKLLQEASQRGSADNITCLVVRFLEQENHLPERPTNDQAS.

Residues 1–24 form the signal peptide; that stretch reads MREVLLLGSLVVLALLSLFPCCSC. The region spanning 64–310 is the PPM-type phosphatase domain; that stretch reads SYGYASSPGK…DNITCLVVRF (247 aa). Mn(2+)-binding residues include D100, G101, D262, and D301.

It belongs to the PP2C family. It depends on Mg(2+) as a cofactor. Requires Mn(2+) as cofactor.

The catalysed reaction is O-phospho-L-seryl-[protein] + H2O = L-seryl-[protein] + phosphate. It carries out the reaction O-phospho-L-threonyl-[protein] + H2O = L-threonyl-[protein] + phosphate. This Oryza sativa subsp. japonica (Rice) protein is Probable protein phosphatase 2C 59.